The sequence spans 517 residues: Ribonuclease Y (517 aa).

Residues 1-21 traverse the membrane as a helical segment; sequence MIEVLIGLGAGVVGVGAGYLY. The 67-residue stretch at 207-273 folds into the KH domain; that stretch reads LINVVNIKND…TRVIELLVED (67 aa). Positions 333–426 constitute an HD domain; it reads ALAHSLEVAH…VCAADALSAA (94 aa).

This sequence belongs to the RNase Y family.

It localises to the cell membrane. In terms of biological role, endoribonuclease that initiates mRNA decay. The protein is Ribonuclease Y of Campylobacter concisus (strain 13826).